Reading from the N-terminus, the 78-residue chain is Acyl carrier protein (78 aa).

A Carrier domain is found at 2-77 (SDIEARVKKI…NAIDYANTHQ (76 aa)). Serine 37 is modified (O-(pantetheine 4'-phosphoryl)serine).

Belongs to the acyl carrier protein (ACP) family. In terms of processing, 4'-phosphopantetheine is transferred from CoA to a specific serine of apo-ACP by AcpS. This modification is essential for activity because fatty acids are bound in thioester linkage to the sulfhydryl of the prosthetic group.

The protein resides in the cytoplasm. Its pathway is lipid metabolism; fatty acid biosynthesis. Functionally, carrier of the growing fatty acid chain in fatty acid biosynthesis. The polypeptide is Acyl carrier protein (Comamonas testosteroni (Pseudomonas testosteroni)).